Consider the following 238-residue polypeptide: Ribonuclease PH (238 aa).

Residues Arg-86 and 124–126 contribute to the phosphate site; that span reads GTR.

It belongs to the RNase PH family. In terms of assembly, homohexameric ring arranged as a trimer of dimers.

The catalysed reaction is tRNA(n+1) + phosphate = tRNA(n) + a ribonucleoside 5'-diphosphate. In terms of biological role, phosphorolytic 3'-5' exoribonuclease that plays an important role in tRNA 3'-end maturation. Removes nucleotide residues following the 3'-CCA terminus of tRNAs; can also add nucleotides to the ends of RNA molecules by using nucleoside diphosphates as substrates, but this may not be physiologically important. Probably plays a role in initiation of 16S rRNA degradation (leading to ribosome degradation) during starvation. In Agrobacterium fabrum (strain C58 / ATCC 33970) (Agrobacterium tumefaciens (strain C58)), this protein is Ribonuclease PH.